The chain runs to 166 residues: Interferon gamma (166 aa).

Positions 1–23 are cleaved as a signal peptide; sequence MNYTSYILAFQLCVILCSSGCNC. Q24 carries the post-translational modification Pyrrolidone carboxylic acid. N39 and N106 each carry an N-linked (GlcNAc...) asparagine glycan.

It belongs to the type II (or gamma) interferon family. Homodimer. Interacts with IFNGR1 (via extracellular domain); this interaction promotes IFNGR1 dimerization. In terms of tissue distribution, released primarily from activated T lymphocytes.

Its subcellular location is the secreted. In terms of biological role, type II interferon produced by immune cells such as T-cells and NK cells that plays crucial roles in antimicrobial, antiviral, and antitumor responses by activating effector immune cells and enhancing antigen presentation. Primarily signals through the JAK-STAT pathway after interaction with its receptor IFNGR1 to affect gene regulation. Upon IFNG binding, IFNGR1 intracellular domain opens out to allow association of downstream signaling components JAK2, JAK1 and STAT1, leading to STAT1 activation, nuclear translocation and transcription of IFNG-regulated genes. Many of the induced genes are transcription factors such as IRF1 that are able to further drive regulation of a next wave of transcription. Plays a role in class I antigen presentation pathway by inducing a replacement of catalytic proteasome subunits with immunoproteasome subunits. In turn, increases the quantity, quality, and repertoire of peptides for class I MHC loading. Increases the efficiency of peptide generation also by inducing the expression of activator PA28 that associates with the proteasome and alters its proteolytic cleavage preference. Up-regulates as well MHC II complexes on the cell surface by promoting expression of several key molecules such as cathepsins B/CTSB, H/CTSH, and L/CTSL. Participates in the regulation of hematopoietic stem cells during development and under homeostatic conditions by affecting their development, quiescence, and differentiation. The polypeptide is Interferon gamma (IFNG) (Canis lupus familiaris (Dog)).